A 101-amino-acid polypeptide reads, in one-letter code: MAKQSMKAREVVRVKLAEKYRAKREELKAIISGVNSSDEDRWDAVLKLQTLPRDSSPSRQRKRCRQTGRPHGYVGKFGLSRIKLREAAMRGEVPGLKKASW.

The protein belongs to the universal ribosomal protein uS14 family. As to quaternary structure, part of the 30S ribosomal subunit. Contacts proteins S3 and S10.

Binds 16S rRNA, required for the assembly of 30S particles and may also be responsible for determining the conformation of the 16S rRNA at the A site. The protein is Small ribosomal subunit protein uS14 of Serratia proteamaculans (strain 568).